Here is a 199-residue protein sequence, read N- to C-terminus: Ribonuclease P protein subunit p25 (199 aa).

Residues 1-11 (MENFRKVRSEE) are compositionally biased toward basic and acidic residues. Disordered regions lie at residues 1-31 (MENFRKVRSEEAPAGDGDEGGSPNSGPFADL) and 146-199 (PRQL…DRTA). Residue Ser-172 is modified to Phosphoserine. The segment covering 190–199 (PEAENEDRTA) has biased composition (acidic residues).

The protein belongs to the histone-like Alba family. As to quaternary structure, component of nuclear RNase P and RNase MRP ribonucleoproteins. RNase P consists of a catalytic RNA moiety and 10 different protein chains; POP1, POP4, POP5, POP7, RPP14, RPP21, RPP25, RPP30, RPP38 and RPP40. Within the RNase P complex, POP1, POP7 and RPP25 form the 'finger' subcomplex, POP5, RPP14, RPP40 and homodimeric RPP30 form the 'palm' subcomplex, and RPP21, POP4 and RPP38 form the 'wrist' subcomplex. All subunits of the RNase P complex interact with the catalytic RNA. Several subunits of RNase P are also part of the RNase MRP complex. RNase MRP consists of a catalytic RNA moiety and about 8 protein subunits; POP1, POP7, RPP25, RPP30, RPP38, RPP40 and possibly also POP4 and POP5. POP7 forms a heterodimer with RPP25 that binds to the P3 stem loop of the catalytic RNA.

It localises to the nucleus. The protein resides in the nucleolus. Its function is as follows. Component of ribonuclease P, a ribonucleoprotein complex that generates mature tRNA molecules by cleaving their 5'-ends. Also a component of the MRP ribonuclease complex, which cleaves pre-rRNA sequences. The protein is Ribonuclease P protein subunit p25 (Rpp25) of Mus musculus (Mouse).